A 2116-amino-acid polypeptide reads, in one-letter code: Non-structural polyprotein p200 (2116 aa).

The segment at 36 to 49 (EVRDVVTAAQKRAI) is required for efficient proteolysis and P150-P90 interaction. The 191-residue stretch at 57 to 247 (VFTQMQVSDH…TRPCTTRIYQ (191 aa)) folds into the Alphavirus-like MT domain. Residues 715–805 (GQLALTSPPP…PATPARADPD (91 aa)) are disordered. Composition is skewed to pro residues over residues 721 to 730 (SPPPDNPPPP) and 744 to 767 (GPPPPAPARDPPPPAPSPPAPPRA). 3 short sequence motifs (pxxPxR; class II SH3-binding) span residues 727–732 (PPPPRR), 747–752 (PPAPAR), and 761–766 (PPAPPR). In terms of domain architecture, Macro spans 806-985 (SDIVESYARA…LMHASVLVGA (180 aa)). A disordered region spans residues 990–1028 (RRVSPPPTEPPASRPADDPGRSAQRTAPPPAAPPGDAAA). Residues 993-1002 (SPPPTEPPAS) are compositionally biased toward pro residues. A Peptidase C27 domain is found at 1000 to 1301 (PASRPADDPG…WLAVPLSRGG (302 aa)). Cysteine 1152 functions as the For cysteine protease activity in the catalytic mechanism. An interaction with host CALM1 region spans residues 1152-1183 (CWLRAAANVAQAARACGAYTSAGCPKCAYGRA). Positions 1175, 1178, 1227, and 1273 each coordinate Zn(2+). The segment at 1193 to 1228 (FAALSQRWIASHADASLDGTGDPLDPLMATVGCACS) is EF-hand-like. Catalysis depends on histidine 1273, which acts as the For cysteine protease activity. A (+)RNA virus helicase ATP-binding domain is found at 1320-1468 (EVRRLGDDAM…VPDRWPTERS (149 aa)). 1352–1359 (MAAGAGKT) is a binding site for a ribonucleoside 5'-triphosphate. In terms of domain architecture, (+)RNA virus helicase C-terminal spans 1469-1609 (RHTWRFPDCW…ELKEVPAGID (141 aa)). Residues 1700–1900 (YRAGEDGSTL…VELEISAALL (201 aa)) are involved in P150-P90 interaction. One can recognise a RdRp catalytic domain in the interval 1870 to 1981 (TNAIEVDFTE…FLPEGARSAA (112 aa)). Positions 1902 to 1906 (LPCAE) match the Human RB1 binding motif.

As to quaternary structure, interacts with RNA-directed RNA polymerase p90. Interacts with host CALM1; this interaction is necessary for the protease activity and viral infectivity. Interacts with host C1QBP. Interacts with the capsid protein. Interacts with human RB1/retinoblastoma protein. Interacts with protease/methyltransferase p150. Requires Zn(2+) as cofactor. Specific enzymatic cleavage by its own cysteine protease yield mature proteins p150 and p90.

Its subcellular location is the host membrane. It is found in the host cytoplasm. The protein localises to the host perinuclear region. The enzyme catalyses RNA(n) + a ribonucleoside 5'-triphosphate = RNA(n+1) + diphosphate. It carries out the reaction a ribonucleoside 5'-triphosphate + H2O = a ribonucleoside 5'-diphosphate + phosphate + H(+). The catalysed reaction is ATP + H2O = ADP + phosphate + H(+). Probable principal replicase for the negative-strand DNA, which replicates the 40S (+) genomic RNA into (-) antigenomic RNA. It cannot replicate the (-) into (+) until cleaved into p150 and p90 mature proteins. Its function is as follows. Protease that cleaves the precursor polyprotein into two mature products. Together with RNA-directed RNA polymerase p90, replicates the 40S genomic and antigenomic RNA by recognizing replications specific signals. The heterodimer P150/p90 is probably the principal replicase for positive-strand genomic RNA and the 24S subgenomic RNA, which codes for structural proteins. Responsible for the mRNA-capping of the viral mRNAs. This function is necessary since all viral RNAs are synthesized in the cytoplasm, and host capping enzymes are restricted to the nucleus. Forms fibers late in the infection that may be involved in cell-to-cell spread of the virus RNA in the absence of virus particle formation. In terms of biological role, together with protease/methyltransferase p150, replicates the 40S genomic and antigenomic RNA by recognizing replications specific signals. The heterodimer P150/p90 is probably the principal replicase for positive-strand genomic RNA and the 24S subgenomic RNA, which codes for structural proteins. A helicase activity is probably also present. The polypeptide is Non-structural polyprotein p200 (Rubella virus (strain BRDII) (RUBV)).